The chain runs to 679 residues: Tripartite terminase subunit 1 (679 aa).

A C3H1-type zinc finger spans residues 180-208; the sequence is CIYCLNEHMMLPNQGESLPSLMMCVNCKH.

It belongs to the herpesviridae TRM1 protein family. Associates with TRM2 and TRM3 to form the tripartite terminase complex. Interacts with portal protein.

The protein localises to the host nucleus. Component of the molecular motor that translocates viral genomic DNA in empty capsid during DNA packaging. Forms a tripartite terminase complex together with TRM2 and TRM3 in the host cytoplasm. Once the complex reaches the host nucleus, it interacts with the capsid portal vertex. This portal forms a ring in which genomic DNA is translocated into the capsid. TRM1 carries an endonuclease activity that plays an important role for the cleavage of concatemeric viral DNA into unit length genomes. In Saimiriine herpesvirus 2 (strain 11) (SaHV-2), this protein is Tripartite terminase subunit 1.